A 306-amino-acid chain; its full sequence is Aspartate carbamoyltransferase catalytic subunit (306 aa).

Residues R55 and T56 each coordinate carbamoyl phosphate. K84 lines the L-aspartate pocket. The carbamoyl phosphate site is built by R105, H133, and Q136. L-aspartate is bound by residues R166 and R227. Residues L265 and P266 each coordinate carbamoyl phosphate.

Belongs to the aspartate/ornithine carbamoyltransferase superfamily. ATCase family. As to quaternary structure, heterododecamer (2C3:3R2) of six catalytic PyrB chains organized as two trimers (C3), and six regulatory PyrI chains organized as three dimers (R2).

The catalysed reaction is carbamoyl phosphate + L-aspartate = N-carbamoyl-L-aspartate + phosphate + H(+). Its pathway is pyrimidine metabolism; UMP biosynthesis via de novo pathway; (S)-dihydroorotate from bicarbonate: step 2/3. Catalyzes the condensation of carbamoyl phosphate and aspartate to form carbamoyl aspartate and inorganic phosphate, the committed step in the de novo pyrimidine nucleotide biosynthesis pathway. The polypeptide is Aspartate carbamoyltransferase catalytic subunit (Neisseria meningitidis serogroup C (strain 053442)).